Reading from the N-terminus, the 371-residue chain is Cytochrome b (371 aa).

4 helical membrane passes run 25 to 45 (FGSM…FLAV), 69 to 90 (WMMQ…YIHI), 105 to 125 (WLSG…GYVL), and 170 to 190 (FFAL…LHIM). Heme b is bound by residues His-75 and His-89. 2 residues coordinate heme b: His-174 and His-188. His-193 provides a ligand contact to a ubiquinone. The next 4 helical transmembrane spans lie at 218 to 238 (YKDL…VSFL), 280 to 300 (LGGA…PFTH), 312 to 332 (IMQL…WAAT), and 339 to 358 (FTMI…IMNP).

This sequence belongs to the cytochrome b family. The cytochrome bc1 complex contains 3 respiratory subunits (MT-CYB, CYC1 and UQCRFS1), 2 core proteins (UQCRC1 and UQCRC2) and probably 6 low-molecular weight proteins. Requires heme b as cofactor.

It localises to the mitochondrion inner membrane. In terms of biological role, component of the ubiquinol-cytochrome c reductase complex (complex III or cytochrome b-c1 complex) that is part of the mitochondrial respiratory chain. The b-c1 complex mediates electron transfer from ubiquinol to cytochrome c. Contributes to the generation of a proton gradient across the mitochondrial membrane that is then used for ATP synthesis. The chain is Cytochrome b (MT-CYB) from Eryx miliaris (Desert sand boa).